A 402-amino-acid polypeptide reads, in one-letter code: Imidazolonepropionase (402 aa).

2 residues coordinate Fe(3+): histidine 66 and histidine 68. Residues histidine 66 and histidine 68 each coordinate Zn(2+). 3 residues coordinate 4-imidazolone-5-propanoate: arginine 75, tyrosine 138, and histidine 171. Tyrosine 138 serves as a coordination point for N-formimidoyl-L-glutamate. Position 236 (histidine 236) interacts with Fe(3+). Histidine 236 contacts Zn(2+). Position 239 (glutamine 239) interacts with 4-imidazolone-5-propanoate. Aspartate 311 lines the Fe(3+) pocket. Aspartate 311 contacts Zn(2+). Asparagine 313 and glycine 315 together coordinate N-formimidoyl-L-glutamate. Threonine 316 serves as a coordination point for 4-imidazolone-5-propanoate.

Belongs to the metallo-dependent hydrolases superfamily. HutI family. The cofactor is Zn(2+). Fe(3+) is required as a cofactor.

Its subcellular location is the cytoplasm. It catalyses the reaction 4-imidazolone-5-propanoate + H2O = N-formimidoyl-L-glutamate. It participates in amino-acid degradation; L-histidine degradation into L-glutamate; N-formimidoyl-L-glutamate from L-histidine: step 3/3. Functionally, catalyzes the hydrolytic cleavage of the carbon-nitrogen bond in imidazolone-5-propanoate to yield N-formimidoyl-L-glutamate. It is the third step in the universal histidine degradation pathway. This chain is Imidazolonepropionase, found in Vibrio cholerae serotype O1 (strain ATCC 39541 / Classical Ogawa 395 / O395).